Consider the following 430-residue polypeptide: Levansucrase Lscgamma (430 aa).

Residues Trp60, Asp61, Ala147, Arg217, and Asp218 each contribute to the sucrose site. The active-site Nucleophile is the Asp61. The active-site Proton donor/acceptor is the Glu302.

It belongs to the glycosyl hydrolase 68 family. Homodimer.

It catalyses the reaction [6)-beta-D-fructofuranosyl-(2-&gt;](n) alpha-D-glucopyranoside + sucrose = [6)-beta-D-fructofuranosyl-(2-&gt;](n+1) alpha-D-glucopyranoside + D-glucose. Its activity is regulated as follows. Sucrose hydrolase activity is negatively affected by salt concentration. The levan polymerization rate increases sharply in relation to sucrose concentration reaching the maximum at 100 mM sucrose, and then steadily decreases, suggesting a strong inhibition of the activity by the substrate. Catalyzes the synthesis of levan, a fructose polymer, by transferring the fructosyl moiety from sucrose to a growing acceptor molecule. Also displays sucrose hydrolase activity. Can depolymerize the levan produced once substrate is completely exhausted. This is Levansucrase Lscgamma from Pseudomonas syringae pv. actinidiae.